A 567-amino-acid polypeptide reads, in one-letter code: Interferon lambda receptor 1 (567 aa).

An N-terminal signal peptide occupies residues 1–22 (MSAWRIRVLATLCFLWQPRVHG). Residues 23 to 229 (QLPPPQNVTL…YEGEWKFPFS (207 aa)) are Extracellular-facing. Positions 26 to 121 (PPQNVTLLSK…KSQFKEYHLD (96 aa)) constitute a Fibronectin type-III domain. N-linked (GlcNAc...) asparagine glycosylation is present at asparagine 29. Cystine bridges form between cysteine 74–cysteine 82, cysteine 86–cysteine 149, and cysteine 193–cysteine 215. A glycan (N-linked (GlcNAc...) asparagine) is linked at asparagine 141. A helical transmembrane segment spans residues 230–250 (ATIPVFVLLILLTSASIIWLL). Topologically, residues 251–567 (KQDAKHKKMP…YQHSHYMRRS (317 aa)) are cytoplasmic.

Belongs to the type II cytokine receptor family. As to quaternary structure, heterodimer with IL10RB.

It localises to the membrane. Functionally, the IFNLR1/IL10RB dimer is a receptor for the cytokine ligands IFNL2 and IFNL3 and mediates their antiviral activity. The ligand/receptor complex stimulate the activation of the JAK/STAT signaling pathway leading to the expression of IFN-stimulated genes (ISG), which contribute to the antiviral state. Determines the cell type specificity of the lambda interferon action. Shows a more restricted pattern of expression in the epithelial tissues thereby limiting responses to lambda interferons primarily to epithelial cells of the respiratory, gastrointestinal, and reproductive tracts. The chain is Interferon lambda receptor 1 (IFNLR1) from Gallus gallus (Chicken).